Reading from the N-terminus, the 197-residue chain is Holliday junction branch migration complex subunit RuvA (197 aa).

The segment at 1–63 is domain I; the sequence is MYAYLKGIIT…EDAHLLYGFR (63 aa). The tract at residues 64 to 142 is domain II; it reads SEDEKKLFLS…VAGDGLPAKV (79 aa). The segment at 143 to 147 is flexible linker; it reads AVQAS. The interval 148–197 is domain III; the sequence is AENQELEEAMEAMLALGYKATELKKIKKFFEGTTDTAENYIKSALKMLVK.

Belongs to the RuvA family. In terms of assembly, homotetramer. Forms an RuvA(8)-RuvB(12)-Holliday junction (HJ) complex. HJ DNA is sandwiched between 2 RuvA tetramers; dsDNA enters through RuvA and exits via RuvB. An RuvB hexamer assembles on each DNA strand where it exits the tetramer. Each RuvB hexamer is contacted by two RuvA subunits (via domain III) on 2 adjacent RuvB subunits; this complex drives branch migration. In the full resolvosome a probable DNA-RuvA(4)-RuvB(12)-RuvC(2) complex forms which resolves the HJ.

It localises to the cytoplasm. In terms of biological role, the RuvA-RuvB-RuvC complex processes Holliday junction (HJ) DNA during genetic recombination and DNA repair, while the RuvA-RuvB complex plays an important role in the rescue of blocked DNA replication forks via replication fork reversal (RFR). RuvA specifically binds to HJ cruciform DNA, conferring on it an open structure. The RuvB hexamer acts as an ATP-dependent pump, pulling dsDNA into and through the RuvAB complex. HJ branch migration allows RuvC to scan DNA until it finds its consensus sequence, where it cleaves and resolves the cruciform DNA. In Streptococcus pneumoniae serotype 2 (strain D39 / NCTC 7466), this protein is Holliday junction branch migration complex subunit RuvA.